An 882-amino-acid chain; its full sequence is Alanine--tRNA ligase (882 aa).

Positions 570, 574, 672, and 676 each coordinate Zn(2+).

It belongs to the class-II aminoacyl-tRNA synthetase family. Zn(2+) serves as cofactor.

The protein localises to the cytoplasm. It carries out the reaction tRNA(Ala) + L-alanine + ATP = L-alanyl-tRNA(Ala) + AMP + diphosphate. Catalyzes the attachment of alanine to tRNA(Ala) in a two-step reaction: alanine is first activated by ATP to form Ala-AMP and then transferred to the acceptor end of tRNA(Ala). Also edits incorrectly charged Ser-tRNA(Ala) and Gly-tRNA(Ala) via its editing domain. The chain is Alanine--tRNA ligase from Xanthomonas campestris pv. campestris (strain B100).